Reading from the N-terminus, the 366-residue chain is N-acetyl-L-citrulline deacetylase (366 aa).

Co(2+)-binding residues include H72 and D103. Catalysis depends on E130, which acts as the Proton donor/acceptor. Residue E155 participates in Co(2+) binding.

Belongs to the peptidase M20A family. N-acetylcitrulline deacetylase subfamily. As to quaternary structure, forms homodimers in the crystal, but higher order oligomers may form in solution. Co(2+) serves as cofactor.

The catalysed reaction is N(2)-acetyl-L-citrulline + H2O = L-citrulline + acetate. It catalyses the reaction N(2)-acetyl-L-ornithine + H2O = L-ornithine + acetate. Its pathway is amino-acid biosynthesis; L-arginine biosynthesis. In terms of biological role, catalyzes the deacetylation of N-acetyl-L-citrulline to produce L-citrulline. This is a step in an alternative arginine biosynthesis pathway. Is also able to catalyze the deacetylation of N-acetylornithine in vitro, with almost equal velocity. However, this reaction may be not relevant in vivo since Xanthomonas does not possess the canonical argF gene and cannot convert ornithine to citrulline via ArgF'. This chain is N-acetyl-L-citrulline deacetylase, found in Xanthomonas campestris pv. campestris (strain ATCC 33913 / DSM 3586 / NCPPB 528 / LMG 568 / P 25).